Consider the following 273-residue polypeptide: DNA repair protein RecO (273 aa).

Residues 250–273 (NVGQNPSGKDDLNERRDVDGTGES) are disordered. Residues 257–273 (GKDDLNERRDVDGTGES) are compositionally biased toward basic and acidic residues.

It belongs to the RecO family.

Involved in DNA repair and RecF pathway recombination. The polypeptide is DNA repair protein RecO (Desulfitobacterium hafniense (strain DSM 10664 / DCB-2)).